Here is a 91-residue protein sequence, read N- to C-terminus: Non-specific lipid-transfer protein P3 (91 aa).

Disulfide bonds link C3/C50, C13/C27, C28/C73, and C48/C87.

It localises to the secreted. Functionally, plant non-specific lipid-transfer proteins transfer phospholipids as well as galactolipids across membranes. May play a role in wax or cutin deposition in the cell walls of expanding epidermal cells and certain secretory tissues. The chain is Non-specific lipid-transfer protein P3 from Vitis sp. (Grape).